A 155-amino-acid chain; its full sequence is RING finger protein 122 (155 aa).

The helical transmembrane segment at 40–60 threads the bilayer; sequence VIFGTGIFVFMLSLIFCCYFI. Residues 93–134 form an RING-type; atypical zinc finger; sequence CAVCLEDFKGKDELGVLPCQHAFHRKCLVKWLEVRCVCPMCN.

Its subcellular location is the golgi apparatus. The protein resides in the endoplasmic reticulum. The protein localises to the membrane. In terms of biological role, may induce necrosis and apoptosis. May play a role in cell viability. In Mus musculus (Mouse), this protein is RING finger protein 122 (Rnf122).